The following is an 88-amino-acid chain: Class II hydrophobin 1 (88 aa).

A signal peptide spans 1–15 (MKFFIATIFATGALA). 4 cysteine pairs are disulfide-bonded: C19-C69, C29-C59, C30-C42, and C70-C81.

The protein belongs to the cerato-ulmin hydrophobin family. As to quaternary structure, homodimer. Homodimers further self-assemble to form highly ordered films at water-air interfaces through intermolecular interactions.

The protein localises to the secreted. Its subcellular location is the cell wall. Functionally, aerial growth, conidiation, and dispersal of filamentous fungi in the environment rely upon a capability of their secreting small amphipathic proteins called hydrophobins (HPBs) with low sequence identity. Class I can self-assemble into an outermost layer of rodlet bundles on aerial cell surfaces, conferring cellular hydrophobicity that supports fungal growth, development and dispersal; whereas Class II form highly ordered films at water-air interfaces through intermolecular interactions but contribute nothing to the rodlet structure. This is Class II hydrophobin 1 from Trichoderma asperellum (strain ATCC 204424 / CBS 433.97 / NBRC 101777).